Consider the following 593-residue polypeptide: Aspartate--tRNA ligase (593 aa).

Position 180 (Glu-180) interacts with L-aspartate. The tract at residues 204–207 (QIFK) is aspartate. L-aspartate is bound at residue Arg-226. ATP-binding positions include 226–228 (RDE) and Gln-235. Position 453 (His-453) interacts with L-aspartate. Glu-487 contacts ATP. Arg-494 contacts L-aspartate. Position 539–542 (539–542 (GLDR)) interacts with ATP.

The protein belongs to the class-II aminoacyl-tRNA synthetase family. Type 1 subfamily. In terms of assembly, homodimer.

The protein localises to the cytoplasm. The enzyme catalyses tRNA(Asp) + L-aspartate + ATP = L-aspartyl-tRNA(Asp) + AMP + diphosphate. Catalyzes the attachment of L-aspartate to tRNA(Asp) in a two-step reaction: L-aspartate is first activated by ATP to form Asp-AMP and then transferred to the acceptor end of tRNA(Asp). The polypeptide is Aspartate--tRNA ligase (Clostridium botulinum (strain ATCC 19397 / Type A)).